A 431-amino-acid chain; its full sequence is Transmembrane protease serine 11C (431 aa).

At 1 to 33 (MARGQPRRSEEQWTALQNRTECKTKIKLTRCGK) the chain is on the cytoplasmic side. The chain crosses the membrane as a helical; Signal-anchor for type II membrane protein span at residues 34 to 54 (ITLGILTAVLAAVLIGLIAYF). Residues 55-431 (AACGKDSFYY…RDWITSKTGL (377 aa)) are Extracellular-facing. The SEA domain occupies 60-177 (DSFYYHVSFK…SSFKFSDIAM (118 aa)). An N-linked (GlcNAc...) asparagine glycan is attached at Asn99. Residues 200 to 430 (VAGGQDAEEG…YRDWITSKTG (231 aa)) enclose the Peptidase S1 domain. Residues Cys225 and Cys241 are joined by a disulfide bond. The Charge relay system role is filled by His240. Asn276 carries N-linked (GlcNAc...) asparagine glycosylation. Asp285 acts as the Charge relay system in catalysis. Asn347 is a glycosylation site (N-linked (GlcNAc...) asparagine). 2 disulfides stabilise this stretch: Cys350–Cys366 and Cys377–Cys406. The active-site Charge relay system is the Ser381.

This sequence belongs to the peptidase S1 family. In terms of processing, proteolytically cleaved via an autocatalytic mechanism. As to expression, expressed specifically in Purkinje neurons of the cerebellum (at protein level). Also detected in spinal cord.

It is found in the cell membrane. The protein localises to the cell projection. The protein resides in the dendrite. Its subcellular location is the perikaryon. Serine protease which has a preference for Arg or Lys in position P1 and uncharged residues in positions P2 and P3. Shows specificity towards FGF2 in vitro. In Mus musculus (Mouse), this protein is Transmembrane protease serine 11C.